Here is a 374-residue protein sequence, read N- to C-terminus: Chaperone protein DnaJ (374 aa).

The 66-residue stretch at D5 to G70 folds into the J domain. The CR-type zinc finger occupies G133–Y211. Zn(2+) contacts are provided by C146, C149, C163, C166, C185, C188, C199, and C202. 4 CXXCXGXG motif repeats span residues C146–G153, C163–G170, C185–G192, and C199–G206.

This sequence belongs to the DnaJ family. In terms of assembly, homodimer. Zn(2+) serves as cofactor.

It is found in the cytoplasm. Its function is as follows. Participates actively in the response to hyperosmotic and heat shock by preventing the aggregation of stress-denatured proteins and by disaggregating proteins, also in an autonomous, DnaK-independent fashion. Unfolded proteins bind initially to DnaJ; upon interaction with the DnaJ-bound protein, DnaK hydrolyzes its bound ATP, resulting in the formation of a stable complex. GrpE releases ADP from DnaK; ATP binding to DnaK triggers the release of the substrate protein, thus completing the reaction cycle. Several rounds of ATP-dependent interactions between DnaJ, DnaK and GrpE are required for fully efficient folding. Also involved, together with DnaK and GrpE, in the DNA replication of plasmids through activation of initiation proteins. This Pseudomonas fluorescens (strain SBW25) protein is Chaperone protein DnaJ.